A 258-amino-acid polypeptide reads, in one-letter code: Elongation factor Ts (258 aa).

Positions 81–84 (TDFV) are involved in Mg(2+) ion dislocation from EF-Tu. The disordered stretch occupies residues 216–258 (GLKPAEAPKVEETPPAPPEEPAPEPAPAAESKPAKKGSAKKKK). Pro residues predominate over residues 229–241 (PPAPPEEPAPEPA). Residues 249–258 (AKKGSAKKKK) show a composition bias toward basic residues.

Belongs to the EF-Ts family.

Its subcellular location is the cytoplasm. In terms of biological role, associates with the EF-Tu.GDP complex and induces the exchange of GDP to GTP. It remains bound to the aminoacyl-tRNA.EF-Tu.GTP complex up to the GTP hydrolysis stage on the ribosome. The protein is Elongation factor Ts of Synechococcus sp. (strain JA-2-3B'a(2-13)) (Cyanobacteria bacterium Yellowstone B-Prime).